Consider the following 720-residue polypeptide: Cyclic nucleotide-gated ion channel 17 (720 aa).

At 1–85 (MELRKDKLLM…SEIVLKWNWV (85 aa)) the chain is on the cytoplasmic side. Residues 86–106 (FIVSCMVALFIDPLYFFVPAI) traverse the membrane as a helical segment. Over 107–121 (GGDKNYPCARTDTSL) the chain is Extracellular. The chain crosses the membrane as a helical span at residues 122–142 (SILVTFFRTIADLFYLLHIFI). Over 143 to 178 (KFRTGFIAPNSSTRVFGRGELVMDPKAIAWRYIKSD) the chain is Cytoplasmic. A helical membrane pass occupies residues 179–199 (FIIDLIATLPLPQIVIWFVIS). Over 200 to 211 (TTKSYRFDHNNN) the chain is Extracellular. Residues 212–232 (AIALIVLLQYIPRFYLIIPLS) form a helical membrane-spanning segment. Topologically, residues 233 to 252 (SQIVKATGVVTKTAWAGAAY) are cytoplasmic. A helical transmembrane segment spans residues 253–273 (NLLLYMLASHVLGAAWYILSV). Over 274 to 377 (DRYTSCWKSR…LSTTMFMGET (104 aa)) the chain is Extracellular. A helical transmembrane segment spans residues 378–398 (TFAVLIAIFGLVLFAHLIGNM). The Cytoplasmic portion of the chain corresponds to 399 to 720 (QTYLQSLTVR…EPDFSAEHDD (322 aa)). A nucleoside 3',5'-cyclic phosphate is bound by residues 481–605 (FFSQ…SKKL) and Glu552. A calmodulin-binding region spans residues 597-612 (FRRLHSKKLQHTFRFY). Residues 617–646 (RTWAACFIQAAWRRYKRRVMENNLTAIESM) form the IQ domain.

This sequence belongs to the cyclic nucleotide-gated cation channel (TC 1.A.1.5) family. In terms of assembly, homotetramer or heterotetramer. Part of a functional complex containing PSKR1, BAK1, CNGC17, and AHA. Interacts with AHA1, AHA2, and BAK1, but not with PSKR1 or BRI1.

Its subcellular location is the cell membrane. Probable cyclic nucleotide-gated ion channel. Forms a functional cation-translocating unit with AHAs that is activated by PSKR1/BAK1 and possibly other BAK1/RLK complexes. Required for PSK-induced protoplast expansion. The sequence is that of Cyclic nucleotide-gated ion channel 17 from Arabidopsis thaliana (Mouse-ear cress).